The chain runs to 466 residues: L-seryl-tRNA(Sec) selenium transferase (466 aa).

Residue lysine 293 is modified to N6-(pyridoxal phosphate)lysine.

This sequence belongs to the SelA family. It depends on pyridoxal 5'-phosphate as a cofactor.

It localises to the cytoplasm. The enzyme catalyses L-seryl-tRNA(Sec) + selenophosphate + H(+) = L-selenocysteinyl-tRNA(Sec) + phosphate. It participates in aminoacyl-tRNA biosynthesis; selenocysteinyl-tRNA(Sec) biosynthesis; selenocysteinyl-tRNA(Sec) from L-seryl-tRNA(Sec) (bacterial route): step 1/1. In terms of biological role, converts seryl-tRNA(Sec) to selenocysteinyl-tRNA(Sec) required for selenoprotein biosynthesis. The protein is L-seryl-tRNA(Sec) selenium transferase of Desulfotalea psychrophila (strain LSv54 / DSM 12343).